Reading from the N-terminus, the 349-residue chain is tRNA pseudouridine synthase D (349 aa).

Phenylalanine 27 is a binding site for substrate. Aspartate 80 (nucleophile) is an active-site residue. Substrate is bound at residue asparagine 129. Positions 155 to 303 (GVPNYFGAQR…VEAARRAMLL (149 aa)) constitute a TRUD domain. Phenylalanine 329 lines the substrate pocket.

Belongs to the pseudouridine synthase TruD family.

The enzyme catalyses uridine(13) in tRNA = pseudouridine(13) in tRNA. In terms of biological role, responsible for synthesis of pseudouridine from uracil-13 in transfer RNAs. This chain is tRNA pseudouridine synthase D, found in Escherichia coli O9:H4 (strain HS).